The primary structure comprises 120 residues: Dihydroneopterin aldolase (120 aa).

Residues Glu-21, Tyr-53, and 72 to 73 (VE) each bind substrate. Lys-99 serves as the catalytic Proton donor/acceptor.

This sequence belongs to the DHNA family.

The catalysed reaction is 7,8-dihydroneopterin = 6-hydroxymethyl-7,8-dihydropterin + glycolaldehyde. The protein operates within cofactor biosynthesis; tetrahydrofolate biosynthesis; 2-amino-4-hydroxy-6-hydroxymethyl-7,8-dihydropteridine diphosphate from 7,8-dihydroneopterin triphosphate: step 3/4. Catalyzes the conversion of 7,8-dihydroneopterin to 6-hydroxymethyl-7,8-dihydropterin. In Bacillus subtilis (strain 168), this protein is Dihydroneopterin aldolase (folB).